A 335-amino-acid chain; its full sequence is Glyceraldehyde-3-phosphate dehydrogenase 2 (335 aa).

Residues 12–13 (RI), D35, R79, and S121 contribute to the NAD(+) site. D-glyceraldehyde 3-phosphate is bound by residues 152–154 (SCT) and T183. C153 serves as the catalytic Nucleophile. N184 contributes to the NAD(+) binding site. D-glyceraldehyde 3-phosphate is bound by residues R198, 211 to 212 (TG), and R234. N316 serves as a coordination point for NAD(+).

The protein belongs to the glyceraldehyde-3-phosphate dehydrogenase family. Homotetramer.

It is found in the cytoplasm. It carries out the reaction D-glyceraldehyde 3-phosphate + phosphate + NAD(+) = (2R)-3-phospho-glyceroyl phosphate + NADH + H(+). It functions in the pathway carbohydrate degradation; glycolysis; pyruvate from D-glyceraldehyde 3-phosphate: step 1/5. Inhibited by pentalenolactone. Functionally, catalyzes the oxidative phosphorylation of glyceraldehyde 3-phosphate (G3P) to 1,3-bisphosphoglycerate (BPG) using the cofactor NAD. The first reaction step involves the formation of a hemiacetal intermediate between G3P and a cysteine residue, and this hemiacetal intermediate is then oxidized to a thioester, with concomitant reduction of NAD to NADH. The reduced NADH is then exchanged with the second NAD, and the thioester is attacked by a nucleophilic inorganic phosphate to produce BPG. This is Glyceraldehyde-3-phosphate dehydrogenase 2 (gap2) from Streptomyces avermitilis (strain ATCC 31267 / DSM 46492 / JCM 5070 / NBRC 14893 / NCIMB 12804 / NRRL 8165 / MA-4680).